Here is a 183-residue protein sequence, read N- to C-terminus: MTIKREMRNDKRAVPKAPINENISAREVRLIGADGEQVGIVSIDEALRIADEAKLDLVEISADAVPPVCKVMDYGKHLFEKKKQANEAKKNQKQIQIKEIKFRPGTEDGDYQVKLRNLVRFLTDGDKAKISLRFRGREMAHQELGMELLKRVEADLAEYGTVEQHPKMEGRQLMMVIAPKKKK.

This sequence belongs to the IF-3 family. Monomer.

It localises to the cytoplasm. Functionally, IF-3 binds to the 30S ribosomal subunit and shifts the equilibrium between 70S ribosomes and their 50S and 30S subunits in favor of the free subunits, thus enhancing the availability of 30S subunits on which protein synthesis initiation begins. The polypeptide is Translation initiation factor IF-3 (Pseudomonas putida (strain ATCC 700007 / DSM 6899 / JCM 31910 / BCRC 17059 / LMG 24140 / F1)).